The sequence spans 152 residues: Transcription factor XE1.1 (152 aa).

Disordered regions lie at residues 1-54 (RDDF…ANNA) and 123-152 (KVSAVSAEPPNTHPGVHPGLTDTTNPMGHM). Basic and acidic residues-rich tracts occupy residues 7-22 (DDMKSDDESSQKEMKS) and 38-54 (PEQKVEREKERRMANNA). Residues 47 to 100 (ERRMANNARERLRVRDINEAFKELGRMCQLHLKSEKPQTKLLILHQAVAVILNL) form the bHLH domain. The interval 102-125 (QQVRERNLNPKAACLKRREEEKVS) is class A specific domain. Residues 143 to 152 (TDTTNPMGHM) show a composition bias toward polar residues.

As to quaternary structure, efficient DNA binding requires dimerization with another bHLH protein. Forms homo- or heterooligomers with myogenin, E12 and ITF2 proteins.

The protein resides in the nucleus. Its function is as follows. Transcriptional regulator. Involved in the initiation of neuronal differentiation. Activates transcription by binding to the E box-containing promoter. This Xenopus laevis (African clawed frog) protein is Transcription factor XE1.1.